The sequence spans 229 residues: GTP:AMP phosphotransferase (229 aa).

An a ribonucleoside 5'-triphosphate-binding site is contributed by 10 to 15 (GVGKGT). The segment at 30–59 (NVGNILRNEIKKESNIGKEVQNVVRSGNLV) is NMP. Residues Arg36, 57–59 (NLV), Gly87, 87–90 (GFPR), and Gln94 each bind AMP. Positions 123-170 (GRRICNICDKNFNVSNIQQDSFDMPPILPSKDCIQCNGHTNLIKRKDD) are LID. Arg178 is a binding site for AMP.

Belongs to the adenylate kinase family.

The protein resides in the mitochondrion. The catalysed reaction is a ribonucleoside 5'-triphosphate + AMP = a ribonucleoside 5'-diphosphate + ADP. It carries out the reaction GTP + AMP = GDP + ADP. Its activity is regulated as follows. Inhibited by the dinucleoside pentaphosphate compound P1,P5-di(guanosine-5') pentaphosphate (GP5A). Its function is as follows. Catalyzes the reversible transfer of the terminal phosphate group between GTP and AMP. Has very low activity with UTP, ITP, CTP and IMP and no activity with ATP, GMP, CMP and UMP in vitro. The sequence is that of GTP:AMP phosphotransferase from Plasmodium falciparum (isolate 3D7).